The sequence spans 255 residues: Indole-3-glycerol phosphate synthase (255 aa).

It belongs to the TrpC family.

It carries out the reaction 1-(2-carboxyphenylamino)-1-deoxy-D-ribulose 5-phosphate + H(+) = (1S,2R)-1-C-(indol-3-yl)glycerol 3-phosphate + CO2 + H2O. It participates in amino-acid biosynthesis; L-tryptophan biosynthesis; L-tryptophan from chorismate: step 4/5. The protein is Indole-3-glycerol phosphate synthase of Streptococcus pneumoniae serotype 19F (strain G54).